The primary structure comprises 267 residues: MLLVLIDVDGFMGQLYNENGTQTILIPREVVIFYWEKNTASKILQLFFHGGIDPIFEKINQRSFSFQSRHIHHFTLDESPLPNSIALPSDTLQAFKAGKKMIFQHLVKITKDHEQILLLHKGGPEGEWVRSFNIPHATVQNLNDLCCPSVEKLVLKKKDYISSSIGCPKHIQGSNHCPVFECHVLFKWIQENTSIVQGVLERPSLPYEKAVLFIEHRINMVDNHPFKKDSIKQNQKKKNWIATQFVQHGIYVDNGILGRIYNKYSLF.

It belongs to the asfivirus I267L family.

The chain is Protein I267L from African swine fever virus (isolate Warthog/Namibia/Wart80/1980) (ASFV).